Here is a 231-residue protein sequence, read N- to C-terminus: MNGLVLGATGLCGGGFLRHAQEAPQFSKVYAILRRELPFPATDKVVAIVERDNSKWSQLITNEMNPQVLFTALATTRAAAGGLDKQYKIDHDLNLQLAQAAKEKGCETIVLVSSAGAHPDSRFGYMKMKGEIERDVIALDFKHIIILRPGPLLGERTNSKQSGFGGNLTAALGTRVYRSRFQRLLGYPVYGDEVGKVGVHLALNTSGKDKVQFVSSKDILDISASLEKIAT.

The N-terminal 44 residues, 1–44 (MNGLVLGATGLCGGGFLRHAQEAPQFSKVYAILRRELPFPATDK), are a transit peptide targeting the mitochondrion.

This sequence belongs to the FMP52 family.

The protein localises to the mitochondrion outer membrane. The sequence is that of Protein FMP52, mitochondrial (FMP52) from Saccharomyces cerevisiae (strain ATCC 204508 / S288c) (Baker's yeast).